A 244-amino-acid polypeptide reads, in one-letter code: Protein pendolino (244 aa).

The region spanning 20 to 176 (QQEYKILAEY…VQENIKESKE (157 aa)) is the UBC core domain.

The protein belongs to the ubiquitin-conjugating enzyme family. FTS subfamily. Interacts (via N-terminus) with cav/HOAP (via N-terminus); the interaction is direct. Probably interacts (via N-terminus and UBC domain) with ver and moi.

It is found in the nucleus. The protein localises to the nucleolus. It localises to the chromosome. In terms of biological role, required for efficient DNA replication, probably through involvement in telomere replication. May have a role in telomere capping of heterochromatic chromosome ends. This is Protein pendolino from Drosophila melanogaster (Fruit fly).